The chain runs to 327 residues: MAGRSRRRSFWSVGVAAALLCLLAAHGCSAKHHKPKPTPGGISGNASSSSSNSSTPSIPPPVAPTPTAPTPPIPSPGTGSSNGSSGGGGGGWLNARATWYGAPNGAGPDDNGGACGFKNVNLPPFSAMTSCGNEPLFKDGKGCGSCYQIRCVGHPACSGLPETVIITDMNYYPVSLYHFDLSGTAFGAMAKDNRNDELRHAGIIDIQFRRVPCQYPGLTVTFHVEQGSNPVYMAILVEYENGDGDVVQVDLMESRYSTGGVDGTPTGVWTPMRESWGSIWRLDTNHPLQGPFSLRITNESGKTLIADQVIPADWQPNTVYSSIVQFD.

An N-terminal signal peptide occupies residues 1–30; it reads MAGRSRRRSFWSVGVAAALLCLLAAHGCSA. The interval 30–88 is disordered; the sequence is AKHHKPKPTPGGISGNASSSSSNSSTPSIPPPVAPTPTAPTPPIPSPGTGSSNGSSGGG. The span at 44-56 shows a compositional bias: low complexity; sequence GNASSSSSNSSTP. N-linked (GlcNAc...) asparagine glycans are attached at residues N45 and N52. Residues 57–75 are compositionally biased toward pro residues; the sequence is SIPPPVAPTPTAPTPPIPS. N-linked (GlcNAc...) asparagine glycosylation is present at N82. Residues 112 to 218 enclose the Expansin-like EG45 domain; it reads GGACGFKNVN…RRVPCQYPGL (107 aa). Disulfide bonds link C115–C143, C146–C213, and C151–C157. Residues 231 to 322 form the Expansin-like CBD domain; the sequence is VYMAILVEYE…DWQPNTVYSS (92 aa). N-linked (GlcNAc...) asparagine glycosylation occurs at N298.

It belongs to the expansin family. Expansin B subfamily.

It is found in the secreted. The protein localises to the cell wall. It localises to the membrane. Its function is as follows. May cause loosening and extension of plant cell walls by disrupting non-covalent bonding between cellulose microfibrils and matrix glucans. No enzymatic activity has been found. May be required for rapid internodal elongation in deepwater rice during submergence. The sequence is that of Expansin-B7 (EXPB7) from Oryza sativa subsp. japonica (Rice).